The sequence spans 481 residues: MESPQLPPSMKRPAIVYGDKTPTILETTLGHLLDELSDIHRDKAAVEFPWQSIRRTYSELAKTSKLVAISLLSAGLCHGDRIGILTGNRYEFLDVFLAAARIGCPAVILQSNMSPGEMKAAVLKSGTTGNPKAAVLTHRNVVNNSHFFSRACDFEQSDIICSPLPLCHSFGLVSAFLCSFMRGCLILFPTEKFSADAVVDVLQNRDVTVIYGVPTMFFAVLEKLQGRGHKPRSMVKAIAGGAPVPYALITQICQDMGVQYFLNGYGMTETSPATFISPLGLCSESSLRTIGKVLPHTNARIVDRWGRTVQQGEKGELCISGLPLQKGYWEDEEKTSEIMTRDADGVIWLHTGDEAIIGEDDHCTITGRIKDIIIRGGLNISPVEIEERLILHPFIQEASVVGLPDKTRGEIVGCFLKQYVDMQRPSDEAVRAWVRELLGWHKAPEAIFWIGDAGIGEDFPKTASGKHQKEKLKDIGTYLLA.

Positions 3 to 11 (SPQLPPSMK) match the PTS2-type peroxisomal targeting signal motif. Residues 124-132 (KSGTTGNPK), 263-268 (NGYGMT), aspartate 353, and arginine 368 each bind ATP. Threonine 268 lines the substrate pocket. CoA contacts are provided by residues 376 to 378 (GGL) and 446 to 448 (AIF). Lysine 466 provides a ligand contact to ATP.

This sequence belongs to the ATP-dependent AMP-binding enzyme family.

Its pathway is alkaloid biosynthesis. In terms of biological role, acyl-CoA ligase; part of the gene cluster that mediates the biosynthesis of communesins, a prominent class of indole alkaloids with great potential as pharmaceuticals. Communesins are biosynthesized by the coupling of tryptamine and aurantioclavine, two building blocks derived from L-tryptophan. The L-tryptophan decarboxylase cnsB converts L-tryptophan to tryptamine, whereas the tryptophan dimethylallyltransferase cnsF converts L-tryptophan to 4-dimethylallyl tryptophan which is further transformed to aurantioclavine by the aurantioclavine synthase cnsA, probably aided by the catalase cnsD. The cytochrome P450 monooxygenase cnsC catalyzes the heterodimeric coupling between the two different indole moieties, tryptamine and aurantioclavine, to construct vicinal quaternary stereocenters and yield the heptacyclic communesin scaffold. The O-methyltransferase cnsE then methylates the communesin scaffold to produce communesin K, the simplest characterized communesin that contains the heptacyclic core. The dioxygenase cnsJ converts communesin K into communesin I. Acylation to introduce the hexadienyl group at position N16 of communesin I by the acyltransferase cnsK leads to the production of communesin B. The hexadienyl group is produced by the highly reducing polyketide synthase cnsI, before being hydrolytically removed from cnsI by the serine hydrolase cnsH, converted into hexadienyl-CoA by the CoA ligase cnsG, and then transferred to communesin I by cnsK. Surprisingly, cnsK may also be a promiscuous acyltransferase that can tolerate a range of acyl groups, including acetyl-, propionyl-, and butyryl-CoA, which lead to communesins A, G and H respectively. The roles of the alpha-ketoglutarate-dependent dioxygenases cnsM and cnsP have still to be determined. This Penicillium expansum (Blue mold rot fungus) protein is Acyl-CoA ligase cnsG.